We begin with the raw amino-acid sequence, 254 residues long: Coenzyme F420:L-glutamate ligase (254 aa).

Residues 11–14 (IPLI), 40–41 (ST), and lysine 45 contribute to the GTP site. Aspartate 109 lines the a divalent metal cation pocket. GTP is bound at residue asparagine 112. Residues aspartate 150, threonine 151, and glutamate 208 each contribute to the a divalent metal cation site. 206–213 (MGEGAGGI) serves as a coordination point for GTP.

The protein belongs to the CofE family. In terms of assembly, homodimer. Mg(2+) serves as cofactor. Mn(2+) is required as a cofactor. Requires K(+) as cofactor.

The enzyme catalyses oxidized coenzyme F420-0 + GTP + L-glutamate = oxidized coenzyme F420-1 + GDP + phosphate + H(+). It catalyses the reaction oxidized coenzyme F420-1 + GTP + L-glutamate = oxidized coenzyme F420-2 + GDP + phosphate + H(+). It functions in the pathway cofactor biosynthesis; coenzyme F420 biosynthesis. Functionally, catalyzes the GTP-dependent successive addition of two or more gamma-linked L-glutamates to the L-lactyl phosphodiester of 7,8-didemethyl-8-hydroxy-5-deazariboflavin (F420-0) to form coenzyme F420-0-glutamyl-glutamate (F420-2) or polyglutamated F420 derivatives. In Methanosarcina acetivorans (strain ATCC 35395 / DSM 2834 / JCM 12185 / C2A), this protein is Coenzyme F420:L-glutamate ligase.